A 428-amino-acid chain; its full sequence is MNNQKSKELFQEAQKYLVGGVNSPVRAFKAVEADPIFIKKGKGCRIWDVDDNEYIDYVLSWGPLILGHAHDQVINAIKQISNYGTSFGAPTELEVEMAKAVIDAVKSVEMVRFVNSGTEATMSAIRLARGYTKRKKIIKFDGCYHGHGDSLLVSAGSGVATLGIPGTPGIPEELASLTIVLPYNNIEAVEEAFEKYGDDIACVIIEPVAGNMGVVAPSKEYHQKLREITRKYGALLIFDEVMTGFRLSYGGAQELYDIEPDLTTFGKVIGGGLPVGAYGGKGEIMEYVAPVGPVYQAGTLSGNPLAMAAGLTQLQLLKQLNPYQELNEKGRFLEEGFKKISQETGVPVVVNRVGSMITVFFTDKEVVDFATAKTSDTKKFAKFFRCMLEKGIYLPASQFEAFFLSTAHSQRDLEDTLNKAYECFKQLS.

Lys267 carries the N6-(pyridoxal phosphate)lysine modification.

This sequence belongs to the class-III pyridoxal-phosphate-dependent aminotransferase family. HemL subfamily. As to quaternary structure, homodimer. Requires pyridoxal 5'-phosphate as cofactor.

The protein localises to the cytoplasm. It catalyses the reaction (S)-4-amino-5-oxopentanoate = 5-aminolevulinate. Its pathway is porphyrin-containing compound metabolism; protoporphyrin-IX biosynthesis; 5-aminolevulinate from L-glutamyl-tRNA(Glu): step 2/2. In Sulfurihydrogenibium sp. (strain YO3AOP1), this protein is Glutamate-1-semialdehyde 2,1-aminomutase.